The chain runs to 244 residues: Ribonuclease 3 (244 aa).

An RNase III domain is found at 5-136 (LAELERAIGI…LVGAIYLDQG (132 aa)). Glutamate 49 lines the Mg(2+) pocket. The active site involves aspartate 53. Positions 122 and 125 each coordinate Mg(2+). The active site involves glutamate 125. Positions 161 to 229 (DPTTRLQELM…ARKALAAWDK (69 aa)) constitute a DRBM domain.

This sequence belongs to the ribonuclease III family. Homodimer. Requires Mg(2+) as cofactor.

It is found in the cytoplasm. It catalyses the reaction Endonucleolytic cleavage to 5'-phosphomonoester.. Digests double-stranded RNA. Involved in the processing of primary rRNA transcript to yield the immediate precursors to the large and small rRNAs (23S and 16S). Processes some mRNAs, and tRNAs when they are encoded in the rRNA operon. Processes pre-crRNA and tracrRNA of type II CRISPR loci if present in the organism. This is Ribonuclease 3 from Chloroflexus aurantiacus (strain ATCC 29364 / DSM 637 / Y-400-fl).